The chain runs to 198 residues: Outer-membrane lipoprotein carrier protein (198 aa).

Residues 1–17 form the signal peptide; that stretch reads MKKFLFSLCLLSSTVLA.

Belongs to the LolA family. Monomer.

It localises to the periplasm. Participates in the translocation of lipoproteins from the inner membrane to the outer membrane. Only forms a complex with a lipoprotein if the residue after the N-terminal Cys is not an aspartate (The Asp acts as a targeting signal to indicate that the lipoprotein should stay in the inner membrane). The chain is Outer-membrane lipoprotein carrier protein from Aliivibrio fischeri (strain MJ11) (Vibrio fischeri).